Consider the following 468-residue polypeptide: MRNFNSPKFGHSMGDDSDDDDFDSGTEPEFLVEPYVLEEFPITEEIEEIEGDDEEYNPNEEIGTSSSDDEDDSDDSDSDKEQENGGEDGEDSSTTNTVPKRVIDDYDEDMEEDEVIKAIITEIKKPRSKPPDIKTEDFVTDLCFHPDQDLLAVGTTTGDVIVYKFTNDECTIVNTHETHTKSVRDVEFNADGDLLISTARDRSIMVTDVETGKLKRFWDDAHEEPVYTMSMITEHTFATGDDGGVLKLWDLRQKDPVFKLKEVEDFISCIITNEQKKYLLMTSGDGYLTTINIPQRKMYVQSEPYEEELTCMGVFRRDSKLVVGSSKGNFYTFNWGQFGYHCDAFIGPKAGVNKMVPITERIAVTGGEDGILRAMHLVPGRVLGIVGQHSLAVETMDINSTGELIASSSHDNDIRFWNIKYFEEFDDIKYNSKPDKKAMTHNLPSSKQTNAADFFSGLAGDQSGAEGD.

Positions 1–107 (MRNFNSPKFG…VPKRVIDDYD (107 aa)) are disordered. 3 stretches are compositionally biased toward acidic residues: residues 15–26 (DDSDDDDFDSGT), 41–58 (PITE…EYNP), and 67–91 (SDDE…DGED). WD repeat units follow at residues 134-173 (KTED…CTIV), 178-217 (THTK…LKRF), 221-259 (AHEE…PVFK), 262-301 (EVED…MYVQ), 304-343 (PYEE…YHCD), and 388-427 (QHSL…EFDD).

Belongs to the WD repeat WDR55 family.

This Aedes aegypti (Yellowfever mosquito) protein is WD repeat-containing protein 55 homolog.